The primary structure comprises 223 residues: MNLNKLKKKAAWAALDYIDPGTIIGVGTGTTIFYFIEALGTIKNLIYGAVSSSNSSTVLLKKHGIEVFDLKNFSSLAIYVDSADEINNHMQMIKGGGGALTREKIIASMSKKFVCIIDKSKKVDVLGTFPLPIEIIPMALSYIFREMIKIGGTPKYRKNVITDNGNIIIDVYNLCIKDPISMEKKINSLPGVVTVGLFASRSADIVLIGTQKGIRTINKKENR.

Residues 28–31 (TGTT), 81–84 (DSAD), and 94–97 (KGGG) contribute to the substrate site. The active-site Proton acceptor is the Glu103. Lys121 provides a ligand contact to substrate.

This sequence belongs to the ribose 5-phosphate isomerase family. As to quaternary structure, homodimer.

It catalyses the reaction aldehydo-D-ribose 5-phosphate = D-ribulose 5-phosphate. Its pathway is carbohydrate degradation; pentose phosphate pathway; D-ribose 5-phosphate from D-ribulose 5-phosphate (non-oxidative stage): step 1/1. Catalyzes the reversible conversion of ribose-5-phosphate to ribulose 5-phosphate. This chain is Ribose-5-phosphate isomerase A, found in Buchnera aphidicola subsp. Acyrthosiphon pisum (strain 5A).